The sequence spans 794 residues: Alpha-1,3-galactosidase B (794 aa).

The first 57 residues, 1–57, serve as a signal peptide directing secretion; it reads MEGNLSFSLMEASGRSIFFLIEGIREQSIKNMFSRMFSWSFVVAACLAGLFPAQSQG. PbH1 repeat units follow at residues 468–499, 609–631, 632–654, 665–686, and 707–728; these read SEDF…HFSN, YPSV…LFTT, PERV…LLAG, CHEV…YQFT, and HRNV…LFAI.

The protein belongs to the glycosyl hydrolase 110 family. B subfamily.

The catalysed reaction is Hydrolysis of terminal, non-reducing branched (1-&gt;3)-alpha-D-galactosidic residues, producing free D-galactose.. The enzyme catalyses Hydrolysis of terminal, non-reducing linear (1-&gt;3)-alpha-D-galactosidic residues, producing free D-galactose.. It catalyses the reaction Hydrolysis of terminal, non-reducing alpha-D-galactose residues in alpha-D-galactosides, including galactose oligosaccharides, galactomannans and galactolipids.. Functionally, alpha-galactosidase. Removes both branched alpha-1,3-linked galactose residues of blood group B antigens and linear alpha-1,3-linked galactose structures. The chain is Alpha-1,3-galactosidase B (glaB) from Akkermansia muciniphila (strain ATCC BAA-835 / DSM 22959 / JCM 33894 / BCRC 81048 / CCUG 64013 / CIP 107961 / Muc).